Here is a 280-residue protein sequence, read N- to C-terminus: Hematopoietically-expressed homeobox protein HHEX homolog (280 aa).

Disordered stretches follow at residues M1–P35 and R221–A280. Residues R165–K224 constitute a DNA-binding region (homeobox). Over residues G232 to R252 the composition is skewed to basic and acidic residues.

The protein localises to the nucleus. Its function is as follows. Transcription factor that may play a central role in activating or maintaining gene expression in the vegetal pole. Part of a gene regulatory circuit with Erg and Tgif that operates early in mesoderm development. The chain is Hematopoietically-expressed homeobox protein HHEX homolog from Patiria miniata (Bat star).